The following is a 157-amino-acid chain: Small ribosomal subunit protein uS9 (157 aa).

Belongs to the universal ribosomal protein uS9 family.

This is Small ribosomal subunit protein uS9 from Caulobacter vibrioides (strain ATCC 19089 / CIP 103742 / CB 15) (Caulobacter crescentus).